A 2178-amino-acid chain; its full sequence is DNA-directed RNA polymerase subunit beta (2178 aa).

3 insert regions span residues serine 269–valine 325, lysine 714–asparagine 1508, and lysine 1703–methionine 1900.

Belongs to the RNA polymerase beta chain family. In plastids the minimal PEP RNA polymerase catalytic core is composed of four subunits: alpha, beta, beta', and beta''. When a (nuclear-encoded) sigma factor is associated with the core the holoenzyme is formed, which can initiate transcription.

The protein resides in the plastid. It is found in the chloroplast. It carries out the reaction RNA(n) + a ribonucleoside 5'-triphosphate = RNA(n+1) + diphosphate. DNA-dependent RNA polymerase catalyzes the transcription of DNA into RNA using the four ribonucleoside triphosphates as substrates. This is DNA-directed RNA polymerase subunit beta from Tupiella akineta (Green alga).